Consider the following 118-residue polypeptide: MNILDALDAQSKRTDLPDFRAGDTVKVHARVVEGNRSRVQIFQGVVIRRQGDGLRETFLVRKISFGVGVERTYPVNSPAIDRIEVVTRGDVRRAKLYYLRELRGKKAKIKEKREKQPS.

This sequence belongs to the bacterial ribosomal protein bL19 family.

In terms of biological role, this protein is located at the 30S-50S ribosomal subunit interface and may play a role in the structure and function of the aminoacyl-tRNA binding site. This chain is Large ribosomal subunit protein bL19, found in Salinispora tropica (strain ATCC BAA-916 / DSM 44818 / JCM 13857 / NBRC 105044 / CNB-440).